Consider the following 123-residue polypeptide: Transmembrane protein 254 (123 aa).

3 helical membrane passes run 15–35 (LFWF…VFWP), 63–83 (NGYW…LVLC), and 95–115 (LLWF…LIAY).

It localises to the membrane. The protein is Transmembrane protein 254 of Mus musculus (Mouse).